The sequence spans 994 residues: Valine--tRNA ligase (994 aa).

The 'HIGH' region motif lies at 43–53; the sequence is PNVTGTLHMGH. Positions 329–345 are enriched in polar residues; that stretch reads QSGMPSGATSDTTNTPS. The interval 329 to 355 is disordered; sequence QSGMPSGATSDTTNTPSDPEASSAANQ. A 'KMSKS' region motif is present at residues 585–589; sequence KMSKS. K588 contacts ATP. The interval 692 to 714 is disordered; it reads AHSPAQHQAGQDGQDAPRTPQPR. A compositionally biased stretch (low complexity) spans 696–707; sequence AQHQAGQDGQDA. A coiled-coil region spans residues 928–994; it reads LIDVDAERVR…NGLRERRATL (67 aa).

This sequence belongs to the class-I aminoacyl-tRNA synthetase family. ValS type 1 subfamily. Monomer.

Its subcellular location is the cytoplasm. It catalyses the reaction tRNA(Val) + L-valine + ATP = L-valyl-tRNA(Val) + AMP + diphosphate. In terms of biological role, catalyzes the attachment of valine to tRNA(Val). As ValRS can inadvertently accommodate and process structurally similar amino acids such as threonine, to avoid such errors, it has a 'posttransfer' editing activity that hydrolyzes mischarged Thr-tRNA(Val) in a tRNA-dependent manner. This Xylella fastidiosa (strain 9a5c) protein is Valine--tRNA ligase.